The following is a 147-amino-acid chain: uncharacterized protein (147 aa).

Positions 50 to 138 constitute an ABM domain; that stretch reads IVVAGNIKVK…LLAKPAEIKI (89 aa).

Belongs to the LsrG family.

This is an uncharacterized protein from Synechocystis sp. (strain ATCC 27184 / PCC 6803 / Kazusa).